A 130-amino-acid polypeptide reads, in one-letter code: Phosphoribosyl-AMP cyclohydrolase (130 aa).

Aspartate 77 is a Mg(2+) binding site. Cysteine 78 serves as a coordination point for Zn(2+). Mg(2+)-binding residues include aspartate 79 and aspartate 81. Zn(2+) is bound by residues cysteine 95 and cysteine 102.

This sequence belongs to the PRA-CH family. Homodimer. The cofactor is Mg(2+). Zn(2+) serves as cofactor.

It is found in the cytoplasm. It catalyses the reaction 1-(5-phospho-beta-D-ribosyl)-5'-AMP + H2O = 1-(5-phospho-beta-D-ribosyl)-5-[(5-phospho-beta-D-ribosylamino)methylideneamino]imidazole-4-carboxamide. It participates in amino-acid biosynthesis; L-histidine biosynthesis; L-histidine from 5-phospho-alpha-D-ribose 1-diphosphate: step 3/9. Functionally, catalyzes the hydrolysis of the adenine ring of phosphoribosyl-AMP. The protein is Phosphoribosyl-AMP cyclohydrolase of Pseudomonas savastanoi pv. phaseolicola (strain 1448A / Race 6) (Pseudomonas syringae pv. phaseolicola (strain 1448A / Race 6)).